Consider the following 206-residue polypeptide: Small ribosomal subunit protein uS4c (206 aa).

The S4 RNA-binding domain maps to 94-152; sequence MRLDNIVFRLGMAPTIPAARQLVNHRHILVNDFTVNIPSYSCKLGDKISVQKRFESKTN.

This sequence belongs to the universal ribosomal protein uS4 family. In terms of assembly, part of the 30S ribosomal subunit. Contacts protein S5. The interaction surface between S4 and S5 is involved in control of translational fidelity.

The protein resides in the plastid. Its subcellular location is the chloroplast. In terms of biological role, one of the primary rRNA binding proteins, it binds directly to 16S rRNA where it nucleates assembly of the body of the 30S subunit. Its function is as follows. With S5 and S12 plays an important role in translational accuracy. This is Small ribosomal subunit protein uS4c (rps4) from Chara vulgaris (Common stonewort).